The chain runs to 299 residues: tRNA dimethylallyltransferase (299 aa).

10–17 (GPTASGKS) lines the ATP pocket. 12–17 (TASGKS) serves as a coordination point for substrate.

The protein belongs to the IPP transferase family. In terms of assembly, monomer. Requires Mg(2+) as cofactor.

The enzyme catalyses adenosine(37) in tRNA + dimethylallyl diphosphate = N(6)-dimethylallyladenosine(37) in tRNA + diphosphate. Its function is as follows. Catalyzes the transfer of a dimethylallyl group onto the adenine at position 37 in tRNAs that read codons beginning with uridine, leading to the formation of N6-(dimethylallyl)adenosine (i(6)A). The chain is tRNA dimethylallyltransferase from Malacoplasma penetrans (strain HF-2) (Mycoplasma penetrans).